The sequence spans 382 residues: S-adenosylmethionine synthase (382 aa).

Residue His-15 coordinates ATP. Residue Asp-17 participates in Mg(2+) binding. A K(+)-binding site is contributed by Glu-43. Residues Glu-56 and Gln-99 each contribute to the L-methionine site. The tract at residues 99-109 (QSPDINQGVDR) is flexible loop. Residues 164–166 (DAK), 230–231 (RF), Asp-239, 245–246 (RK), Ala-262, and Lys-266 each bind ATP. Residue Asp-239 coordinates L-methionine. Lys-270 is a binding site for L-methionine.

This sequence belongs to the AdoMet synthase family. As to quaternary structure, homotetramer; dimer of dimers. The cofactor is Mg(2+). It depends on K(+) as a cofactor.

It is found in the cytoplasm. It carries out the reaction L-methionine + ATP + H2O = S-adenosyl-L-methionine + phosphate + diphosphate. It participates in amino-acid biosynthesis; S-adenosyl-L-methionine biosynthesis; S-adenosyl-L-methionine from L-methionine: step 1/1. Its function is as follows. Catalyzes the formation of S-adenosylmethionine (AdoMet) from methionine and ATP. The overall synthetic reaction is composed of two sequential steps, AdoMet formation and the subsequent tripolyphosphate hydrolysis which occurs prior to release of AdoMet from the enzyme. This Psychromonas ingrahamii (strain DSM 17664 / CCUG 51855 / 37) protein is S-adenosylmethionine synthase.